Here is a 288-residue protein sequence, read N- to C-terminus: Energy-coupling factor transporter ATP-binding protein EcfA2 (288 aa).

Residues 3–246 (IKLEQLGYCY…PDELVDLGLS (244 aa)) enclose the ABC transporter domain. ATP is bound at residue 40–47 (GHTGSGKS).

It belongs to the ABC transporter superfamily. Energy-coupling factor EcfA family. In terms of assembly, forms a stable energy-coupling factor (ECF) transporter complex composed of 2 membrane-embedded substrate-binding proteins (S component), 2 ATP-binding proteins (A component) and 2 transmembrane proteins (T component).

The protein localises to the cell membrane. ATP-binding (A) component of a common energy-coupling factor (ECF) ABC-transporter complex. Unlike classic ABC transporters this ECF transporter provides the energy necessary to transport a number of different substrates. The polypeptide is Energy-coupling factor transporter ATP-binding protein EcfA2 (Listeria innocua serovar 6a (strain ATCC BAA-680 / CLIP 11262)).